Consider the following 354-residue polypeptide: Guanine nucleotide-binding protein G(o) subunit alpha (354 aa).

Residue Gly2 is the site of N-myristoyl glycine attachment. The S-palmitoyl cysteine moiety is linked to residue Cys3. In terms of domain architecture, G-alpha spans 32-354 (KDVKLLLLGA…ANNLRGCGLY (323 aa)). Positions 35 to 48 (KLLLLGAGESGKST) are G1 motif. The GTP site is built by Glu43, Lys46, Ser47, Thr48, Ser152, Leu176, Arg177, Thr178, and Arg179. Residue Ser47 participates in Mg(2+) binding. Residues 174 to 182 (DILRTRVKT) are G2 motif. Thr182 lines the Mg(2+) pocket. The G3 motif stretch occupies residues 197-206 (FRLFDVGGQR). At Gln205 the chain carries 5-glutamyl histamine. The G4 motif stretch occupies residues 266–273 (ILFLNKKD). Residues Asn270, Asp273, and Cys325 each coordinate GTP. The interval 324–329 (TCATDT) is G5 motif. Position 346 is a deamidated asparagine; in form Alpha-3 (Asn346). A lipid anchor (S-palmitoyl cysteine) is attached at Cys351.

It belongs to the G-alpha family. G(i/o/t/z) subfamily. In terms of assembly, g proteins are composed of 3 units; alpha, beta and gamma. The alpha chain contains the guanine nucleotide binding site. Forms a complex with GNB1 and GNG3. Interacts with RGS14. Interacts with RGS16. Interacts with RGS19. Interacts (when palmitoylated) with ADGRG3. Post-translationally, deamidation of Asn-346 converts alpha-1 to alpha-3. In terms of processing, histaminylated at Gln-205 residues by TGM2.

Its subcellular location is the cell membrane. The protein resides in the membrane. The enzyme catalyses GTP + H2O = GDP + phosphate + H(+). The GTPase activity is promoted by GTPAse activators, such as RGS14, RGS16 and RGS19. Guanine nucleotide-binding proteins (G proteins) function as transducers downstream of G protein-coupled receptors (GPCRs) in numerous signaling cascades. The alpha chain contains the guanine nucleotide binding site and alternates between an active, GTP-bound state and an inactive, GDP-bound state. Signaling by an activated GPCR promotes GDP release and GTP binding. The alpha subunit has a low GTPase activity that converts bound GTP to GDP, thereby terminating the signal. Both GDP release and GTP hydrolysis are modulated by numerous regulatory proteins. Signaling is mediated via effector proteins, such as adenylate cyclase. Inhibits adenylate cyclase activity, leading to decreased intracellular cAMP levels. This Cricetulus longicaudatus (Long-tailed dwarf hamster) protein is Guanine nucleotide-binding protein G(o) subunit alpha (GNAO1).